The primary structure comprises 410 residues: Arginine deiminase (410 aa).

Cysteine 400 acts as the Amidino-cysteine intermediate in catalysis.

This sequence belongs to the arginine deiminase family.

Its subcellular location is the cytoplasm. The enzyme catalyses L-arginine + H2O = L-citrulline + NH4(+). Its pathway is amino-acid degradation; L-arginine degradation via ADI pathway; carbamoyl phosphate from L-arginine: step 1/2. In Bacillus cytotoxicus (strain DSM 22905 / CIP 110041 / 391-98 / NVH 391-98), this protein is Arginine deiminase.